A 392-amino-acid polypeptide reads, in one-letter code: MIIPSLLDTDLYKFTMMQVVLHQFPQAQVEYRFKCRNAGVDLTPYIDEIRAEVAHLCQLRFTDDELAYLRGLRFIKSDFVDFLGLFHLNEKYVSVRPSPQGNGEIEISIIGPWLHTILFEVPVLAIVNEVYFRRTQPRPDLAEGRRRLDQKLALLKTPELADCVIADYGTRRRFSREWQEEVLLTMRRLLGPQLAGTSNVHFARLHNMVPLGTMAHEYLQACQALGPRLRDSQVYALERWAREYRGDLGIALSDTYGFDAFLRDFDLYFCKLFDGVRHDSGDPMLWGERMVAHYAANRVDPRTKTLIFSDSLDIPRVIELYERFHGRCRLAFGVGTNLTNDLGYTPLQIVIKMVRCNGQPVAKLSDTPEKTMCDDPGYLSYLRQVYSVQPAA.

H216 carries the phosphohistidine; by autocatalysis modification.

Belongs to the NAPRTase family. Post-translationally, transiently phosphorylated on a His residue during the reaction cycle. Phosphorylation strongly increases the affinity for substrates and increases the rate of nicotinate D-ribonucleotide production. Dephosphorylation regenerates the low-affinity form of the enzyme, leading to product release.

The enzyme catalyses nicotinate + 5-phospho-alpha-D-ribose 1-diphosphate + ATP + H2O = nicotinate beta-D-ribonucleotide + ADP + phosphate + diphosphate. It participates in cofactor biosynthesis; NAD(+) biosynthesis; nicotinate D-ribonucleotide from nicotinate: step 1/1. Functionally, catalyzes the synthesis of beta-nicotinate D-ribonucleotide from nicotinate and 5-phospho-D-ribose 1-phosphate at the expense of ATP. In Cupriavidus necator (strain ATCC 17699 / DSM 428 / KCTC 22496 / NCIMB 10442 / H16 / Stanier 337) (Ralstonia eutropha), this protein is Nicotinate phosphoribosyltransferase.